A 257-amino-acid chain; its full sequence is Zinc uptake system ATP-binding protein ZurA (257 aa).

The region spanning isoleucine 5–glutamate 241 is the ABC transporter domain. Glycine 37–serine 44 lines the ATP pocket.

This sequence belongs to the ABC transporter superfamily.

In terms of biological role, involved in a zinc uptake transport system. The polypeptide is Zinc uptake system ATP-binding protein ZurA (zurA) (Listeria innocua serovar 6a (strain ATCC BAA-680 / CLIP 11262)).